The chain runs to 152 residues: Transposase for insertion sequence element IS200 (152 aa).

Positions 61 and 63 each coordinate Mg(2+). Tyr125 serves as the catalytic Nucleophile. Gln129 provides a ligand contact to Mg(2+).

Belongs to the transposase 17 family. As to quaternary structure, homodimer. Requires Mg(2+) as cofactor.

Transposase responsible for transposition of the IS200 insertion sequence (IS) element. Transposition occurs in 2 main steps, excision from the donor DNA 'top strand' into a single strand circle and its subsequent reinsertion into the DNA target. This increases the copy number of the IS. The sequence is that of Transposase for insertion sequence element IS200 (tnpA1) from Salmonella typhi.